Consider the following 167-residue polypeptide: CS6 fimbrial subunit B (167 aa).

An N-terminal signal peptide occupies residues 1-21; that stretch reads MLKKIISAIALIAGTSGVVNA.

Its subcellular location is the fimbrium. This chain is CS6 fimbrial subunit B (cssB), found in Escherichia coli.